The sequence spans 326 residues: D-amino-acid oxidase (326 aa).

Residues G18, V19, T46, T47, S48, A52, A53, V162, and S179 each contribute to the FAD site. D-proline-binding residues include Y222 and R277. Y222 and R277 together coordinate D-serine. R277, G303, G304, G306, and T308 together coordinate FAD. G304 serves as a coordination point for D-proline. Residue G304 coordinates D-serine.

The protein belongs to the DAMOX/DASOX family. Monomer. FAD serves as cofactor.

The protein resides in the cytoplasm. It is found in the secreted. The protein localises to the cell wall. It carries out the reaction a D-alpha-amino acid + O2 + H2O = a 2-oxocarboxylate + H2O2 + NH4(+). The catalysed reaction is D-valine + O2 + H2O = 3-methyl-2-oxobutanoate + H2O2 + NH4(+). The enzyme catalyses D-leucine + O2 + H2O = 4-methyl-2-oxopentanoate + H2O2 + NH4(+). It catalyses the reaction D-isoleucine + O2 + H2O = (R)-3-methyl-2-oxopentanoate + H2O2 + NH4(+). It carries out the reaction D-tyrosine + O2 + H2O = 3-(4-hydroxyphenyl)pyruvate + H2O2 + NH4(+). The catalysed reaction is D-threonine + O2 + H2O = (S)-3-hydroxy-2-oxobutanoate + H2O2 + NH4(+). With respect to regulation, inhibited by benzoate and phenylmethylsulfonyl fluoride (PMSF). Weakly inhibited by anthranilate, crotonate, and the amino acid-modifying agents dithionitrobenzoic acid and diethyl pyrocarbonate. Not inhibited by malonate, meso-tartrate, D-malate, or the amino acid-modifying agents iodoacetic acid or butane-2,3-dione. Catalyzes the oxidative deamination of D-amino acids with broad substrate specificity. The sequence is that of D-amino-acid oxidase from Rubrobacter xylanophilus (strain DSM 9941 / JCM 11954 / NBRC 16129 / PRD-1).